Consider the following 623-residue polypeptide: 1-deoxy-D-xylulose-5-phosphate synthase (623 aa).

Residues His80 and 121–123 (GHS) contribute to the thiamine diphosphate site. Asp152 lines the Mg(2+) pocket. Residues 153 to 154 (GA), Asn181, Tyr289, and Glu372 each bind thiamine diphosphate. Asn181 provides a ligand contact to Mg(2+).

Belongs to the transketolase family. DXPS subfamily. Homodimer. Mg(2+) serves as cofactor. It depends on thiamine diphosphate as a cofactor.

It catalyses the reaction D-glyceraldehyde 3-phosphate + pyruvate + H(+) = 1-deoxy-D-xylulose 5-phosphate + CO2. It participates in metabolic intermediate biosynthesis; 1-deoxy-D-xylulose 5-phosphate biosynthesis; 1-deoxy-D-xylulose 5-phosphate from D-glyceraldehyde 3-phosphate and pyruvate: step 1/1. In terms of biological role, catalyzes the acyloin condensation reaction between C atoms 2 and 3 of pyruvate and glyceraldehyde 3-phosphate to yield 1-deoxy-D-xylulose-5-phosphate (DXP). In Baumannia cicadellinicola subsp. Homalodisca coagulata, this protein is 1-deoxy-D-xylulose-5-phosphate synthase.